An 83-amino-acid polypeptide reads, in one-letter code: Small ribosomal subunit protein eS21 (83 aa).

Belongs to the eukaryotic ribosomal protein eS21 family. As to quaternary structure, component of the 40S small ribosomal subunit. Interacts with sta.

The protein localises to the cytoplasm. It is found in the cytosol. The protein resides in the rough endoplasmic reticulum. This Ceratitis capitata (Mediterranean fruit fly) protein is Small ribosomal subunit protein eS21 (RpS21).